The following is a 374-amino-acid chain: Putative C-&gt;U-editing enzyme APOBEC-4 (374 aa).

One can recognise a CMP/dCMP-type deaminase domain in the interval 60–176; the sequence is PQTKHLTFYE…AWNRKALQSL (117 aa). Zn(2+) is bound at residue His92. Residue Glu94 is the Proton donor of the active site. Zn(2+)-binding residues include Cys126 and Cys133. The segment at 259-280 is disordered; it reads EKHPLGSAAPAQRQPTRGQDPR.

It belongs to the cytidine and deoxycytidylate deaminase family. Requires Zn(2+) as cofactor. In terms of tissue distribution, predominantly expressed in testis.

Functionally, putative C to U editing enzyme whose physiological substrate is not yet known. The chain is Putative C-&gt;U-editing enzyme APOBEC-4 (Apobec4) from Mus musculus (Mouse).